We begin with the raw amino-acid sequence, 518 residues long: Cytochrome P450 3A27 (518 aa).

Residue Cys447 coordinates heme.

It belongs to the cytochrome P450 family. Heme is required as a cofactor.

The protein localises to the endoplasmic reticulum membrane. Its subcellular location is the microsome membrane. It carries out the reaction an organic molecule + reduced [NADPH--hemoprotein reductase] + O2 = an alcohol + oxidized [NADPH--hemoprotein reductase] + H2O + H(+). Functionally, cytochromes P450 are a group of heme-thiolate monooxygenases. In liver microsomes, this enzyme is involved in an NADPH-dependent electron transport pathway. It oxidizes a variety of structurally unrelated compounds, including steroids, fatty acids, and xenobiotics. This chain is Cytochrome P450 3A27 (cyp3a27), found in Oncorhynchus mykiss (Rainbow trout).